Consider the following 194-residue polypeptide: Orotate phosphoribosyltransferase (194 aa).

116-124 (EDIVTTGLS) lines the 5-phospho-alpha-D-ribose 1-diphosphate pocket. Residues threonine 120 and arginine 148 each contribute to the orotate site.

The protein belongs to the purine/pyrimidine phosphoribosyltransferase family. PyrE subfamily. In terms of assembly, homodimer. It depends on Mg(2+) as a cofactor.

It carries out the reaction orotidine 5'-phosphate + diphosphate = orotate + 5-phospho-alpha-D-ribose 1-diphosphate. Its pathway is pyrimidine metabolism; UMP biosynthesis via de novo pathway; UMP from orotate: step 1/2. Its function is as follows. Catalyzes the transfer of a ribosyl phosphate group from 5-phosphoribose 1-diphosphate to orotate, leading to the formation of orotidine monophosphate (OMP). The sequence is that of Orotate phosphoribosyltransferase from Phenylobacterium zucineum (strain HLK1).